Here is a 545-residue protein sequence, read N- to C-terminus: Squalene monooxygenase SE2 (545 aa).

The chain crosses the membrane as a helical span at residues 12–32 (EYFLMFAATLLFGFVLYLFTL). FAD contacts are provided by residues 86 to 87 (VA), 106 to 107 (ER), Arg114, Arg185, Val201, Asp364, and Met377. 2 helical membrane passes run 475-495 (LFFH…IPFP) and 500-520 (MWLG…IIKS).

This sequence belongs to the squalene monooxygenase family. It depends on FAD as a cofactor. In terms of tissue distribution, weak expression in petioles and flower buds and barely detectable in roots and leaves. In petioles, preferentially observed in vascular bundle tissue (phloem cells and parenchymatous cells near xylem) and resin ducts.

It is found in the membrane. It carries out the reaction squalene + reduced [NADPH--hemoprotein reductase] + O2 = (S)-2,3-epoxysqualene + oxidized [NADPH--hemoprotein reductase] + H2O + H(+). Its pathway is terpene metabolism; lanosterol biosynthesis; lanosterol from farnesyl diphosphate: step 2/3. Functionally, component of the triterpene saponins (e.g. ginsenosides or panaxosides) and phytosterols biosynthetic pathways. Catalyzes the first oxygenation step in sterol biosynthesis and is suggested to be one of the rate-limiting enzymes in this pathway. This chain is Squalene monooxygenase SE2, found in Panax ginseng (Korean ginseng).